Reading from the N-terminus, the 888-residue chain is Tyrosine-protein kinase receptor UFO (888 aa).

The first 18 residues, 1 to 18, serve as a signal peptide directing secretion; sequence MGRVPLAWWLALCCWGCA. Residues 19–86 form an interaction with GAS6 region; the sequence is AHKDTQTEAG…QTQVPLGEDW (68 aa). The Extracellular portion of the chain corresponds to 19–445; the sequence is AHKDTQTEAG…PPRAFSWPWW (427 aa). 2 consecutive Ig-like C2-type domains span residues 30–122 and 133–216; these read PFVG…TFVS and PYFL…ATIT. Residue Asn37 is glycosylated (N-linked (GlcNAc...) asparagine). An intrachain disulfide couples Cys50 to Cys111. N-linked (GlcNAc...) asparagine glycosylation is found at Asn151 and Asn192. The cysteines at positions 154 and 199 are disulfide-linked. 2 consecutive Fibronectin type-III domains span residues 221 to 325 and 330 to 422; these read RPHH…TTEG and PPEN…PWRP. 3 N-linked (GlcNAc...) asparagine glycosylation sites follow: Asn333, Asn339, and Asn395. A helical membrane pass occupies residues 446 to 466; sequence YVLLGALVAAACVLILALFLV. Over 467-888 the chain is Cytoplasmic; that stretch reads HRRKKETRYG…PAPPGQEDGA (422 aa). The region spanning 530–801 is the Protein kinase domain; the sequence is VALGKTLGEG…ELREDLENTL (272 aa). Residues 536–544 and Lys561 each bind ATP; that span reads LGEGEFGAV. Catalysis depends on Asp666, which acts as the Proton acceptor. Tyr697, Tyr773, and Tyr815 each carry phosphotyrosine; by autocatalysis. Residues 820-846 form a disordered region; that stretch reads EGGSHLEPRGAAGGADPPTQPDPKDSC. At Tyr860 the chain carries Phosphotyrosine; by autocatalysis. Residues 865–888 are disordered; that stretch reads STAPGPTLSADRGCPAPPGQEDGA.

The protein belongs to the protein kinase superfamily. Tyr protein kinase family. AXL/UFO subfamily. Heterodimer and heterotetramer with ligand GAS6. Interacts with CBL, GRB2, LCK, NCK2, PIK3R1, PIK3R2, PIK3R3, PLCG1, SOCS1 and TNS2. Part of a complex including AXL, TNK2 and GRB2, in which GRB2 promotes AXL recruitment by TNK2. In terms of processing, monoubiquitinated upon GAS6-binding. A very small proportion of the receptor could be subjected to polyubiquitination in a very transient fashion. Phosphorylated at tyrosine residues by autocatalysis, which activates kinase activity. As to expression, in distinct substructures of a broad spectrum of developing tissues (in the late embryogenesis). In cells forming organ capsules as well as in connective tissue structures (in adult).

It is found in the cell membrane. The catalysed reaction is L-tyrosyl-[protein] + ATP = O-phospho-L-tyrosyl-[protein] + ADP + H(+). Its activity is regulated as follows. Activated by GAS6-binding and subsequent autophosphorylation. Its function is as follows. Receptor tyrosine kinase that transduces signals from the extracellular matrix into the cytoplasm by binding growth factor GAS6 and which is thus regulating many physiological processes including cell survival, cell proliferation, migration and differentiation. Ligand binding at the cell surface induces dimerization and autophosphorylation of AXL. Following activation by ligand, AXL binds and induces tyrosine phosphorylation of PI3-kinase subunits PIK3R1, PIK3R2 and PIK3R3; but also GRB2, PLCG1, LCK and PTPN11. Other downstream substrate candidates for AXL are CBL, NCK2, SOCS1 and TNS2. Recruitment of GRB2 and phosphatidylinositol 3 kinase regulatory subunits by AXL leads to the downstream activation of the AKT kinase. GAS6/AXL signaling plays a role in various processes such as endothelial cell survival during acidification by preventing apoptosis, optimal cytokine signaling during human natural killer cell development, hepatic regeneration, gonadotropin-releasing hormone neuron survival and migration, platelet activation, or regulation of thrombotic responses. Also plays an important role in inhibition of Toll-like receptors (TLRs)-mediated innate immune response. The polypeptide is Tyrosine-protein kinase receptor UFO (Axl) (Mus musculus (Mouse)).